A 185-amino-acid polypeptide reads, in one-letter code: Putative F-box protein At3g17400 (185 aa).

The region spanning 1–47 is the F-box domain; sequence MMTLSDLPSDLAEEVLSKIPVTSLRGVRATCKKWNTLSKDRSFTRKH.

The polypeptide is Putative F-box protein At3g17400 (Arabidopsis thaliana (Mouse-ear cress)).